The following is a 1003-amino-acid chain: MVTNSYMDTRSNLTSVNRGSNVDLEDRFQRELESLLQQHRNQQSFGRERERDIDVHRSGSAPPTVEGLLRAMDNQYLNNNNSDHRDVGNISSITTSNGVELLSDDELRWHPEYLSYYYSNEHSNPRLPPPLLSREDWRVAQRFHNSESVFDPVGEWRKKTVEVDNSSSLFSVQPGVPVEQAENDLMELRNAVAQGRSQKVQRLDQGREDLIGLSGYSGLGPRRKSFADILQEGLERDAALGSQLSRPASCNTFRDMKDAAVLSNFSAGGFDSPLAFHDSLHSTAKNSPNTMLGSTMSSPVPRNRTPDSHLVGRSTASGLPPIGTRVGPVEKKNTFGTAIQNCESYTAADVADTLSRLNMSEMSQVKENHMQSQLQVELENQSDVMRYIPNGHKKALRQQNTAETKDHLFSANYGGMSGYGASLGASTVGSHGQVNIPKRTSSSASLYSTSDHSRLGSVGLSDVNIRNGNINGTDFSTAGGYMAKNKLNSLAEHYSAEGSHLTGDGDRQSLNRLINQVASELHSPVMDPHYSQYLHTASSTAAPIDHSLIRNNFGTSNGDTANEYLAMLLAQNRQQLGNLNAANSRFFESPSYDLGNMYLGNHLPSPSKNSRNFQNMRMSQSASMMKVPFGGLQGSSHVDIGSTAEASLLEGFKNNKTRSLELSEIVGHVIEFSMDQYGSRFIQQKLETATDEEKNAIFPEILPYGRTLMTDVFGNYVIQKFFEHGTTKQRKELAEQVTGHVLALSLQMYGCRVIQKALEVVELEQQARMVKELDGSVMKCVHDQNGNHVIQKCIERLPQDWIQFIISSFYGKVLALSTHPYGCRVIQRVLEHIDDIETQRIIMEEIMDSVCTLAQDQYGNYVIQHIIQHGKPHERSEIINKLAGQIVKMSQQKFASNVVEKCLTFGGPEERQVLVNEMLGYTDENEPLQAMMKDPFGNYVVQKVLETCDDQSLALILSRIKVHLNALKRYTYGKHIVARVEKLITTGERRIGLSSSLAANTTP.

The disordered stretch occupies residues 38–65 (QHRNQQSFGRERERDIDVHRSGSAPPTV). The segment covering 46–57 (GRERERDIDVHR) has biased composition (basic and acidic residues). Phosphoserine is present on Ser225. Over residues 285-300 (KNSPNTMLGSTMSSPV) the composition is skewed to polar residues. Positions 285–328 (KNSPNTMLGSTMSSPVPRNRTPDSHLVGRSTASGLPPIGTRVGP) are disordered. Thr305 is modified (phosphothreonine). Residues 644–984 (AEASLLEGFK…HIVARVEKLI (341 aa)) enclose the PUM-HD domain. Pumilio repeat units lie at residues 664-699 (EIVG…AIFP), 700-735 (EILP…ELAE), 736-771 (QVTG…RMVK), 772-807 (ELDG…FIIS), 808-843 (SFYG…RIIM), 845-880 (EIMD…EIIN), 881-916 (KLAG…VLVN), and 917-958 (EMLG…LILS).

The protein resides in the cytoplasm. In terms of biological role, sequence-specific RNA-binding protein that regulates translation and mRNA stability by binding the 3'-UTR of target mRNAs. Binds the APUM-binding elements (APBEs) in the 3'-UTR mRNA sequence of CLV1, PNH, WUS and FAS2. The protein is Pumilio homolog 4 (APUM4) of Arabidopsis thaliana (Mouse-ear cress).